The primary structure comprises 463 residues: Arginine biosynthesis bifunctional protein ArgJ, chloroplastic (463 aa).

Thr-207, Lys-233, Thr-244, Glu-331, Asn-458, and Thr-463 together coordinate substrate. Residue Thr-244 is the Nucleophile of the active site.

This sequence belongs to the ArgJ family. As to quaternary structure, heterodimer of an alpha and a beta chain.

The protein resides in the plastid. Its subcellular location is the chloroplast. It catalyses the reaction N(2)-acetyl-L-ornithine + L-glutamate = N-acetyl-L-glutamate + L-ornithine. The catalysed reaction is L-glutamate + acetyl-CoA = N-acetyl-L-glutamate + CoA + H(+). Its pathway is amino-acid biosynthesis; L-arginine biosynthesis; L-ornithine and N-acetyl-L-glutamate from L-glutamate and N(2)-acetyl-L-ornithine (cyclic): step 1/1. It participates in amino-acid biosynthesis; L-arginine biosynthesis; N(2)-acetyl-L-ornithine from L-glutamate: step 1/4. Catalyzes two activities which are involved in the cyclic version of arginine biosynthesis: the synthesis of acetylglutamate from glutamate and acetyl-CoA, and of ornithine by transacetylation between acetylornithine and glutamate. This chain is Arginine biosynthesis bifunctional protein ArgJ, chloroplastic, found in Oryza sativa subsp. japonica (Rice).